A 1167-amino-acid chain; its full sequence is DNA-directed RNA polymerase subunit beta (1167 aa).

Residues 1 to 27 (MAVSPANQATAATTSAESRSEATGIPG) are disordered. Over residues 9–23 (ATAATTSAESRSEAT) the composition is skewed to low complexity.

This sequence belongs to the RNA polymerase beta chain family. The RNAP catalytic core consists of 2 alpha, 1 beta, 1 beta' and 1 omega subunit. When a sigma factor is associated with the core the holoenzyme is formed, which can initiate transcription.

It catalyses the reaction RNA(n) + a ribonucleoside 5'-triphosphate = RNA(n+1) + diphosphate. Functionally, DNA-dependent RNA polymerase catalyzes the transcription of DNA into RNA using the four ribonucleoside triphosphates as substrates. In Amycolatopsis mediterranei (strain S699) (Nocardia mediterranei), this protein is DNA-directed RNA polymerase subunit beta.